The following is a 137-amino-acid chain: uncharacterized protein (137 aa).

A helical membrane pass occupies residues 75-91; it reads MFLDAMVILAVASGVSL. Residues 93 to 116 form a disordered region; that stretch reads PQLPGRRSHNASTPGAKKPGKDHG.

It is found in the membrane. This is an uncharacterized protein from Saccharomyces cerevisiae (strain ATCC 204508 / S288c) (Baker's yeast).